The primary structure comprises 617 residues: Proline--tRNA ligase (617 aa).

This sequence belongs to the class-II aminoacyl-tRNA synthetase family. ProS type 1 subfamily. As to quaternary structure, homodimer.

It localises to the cytoplasm. The enzyme catalyses tRNA(Pro) + L-proline + ATP = L-prolyl-tRNA(Pro) + AMP + diphosphate. Its function is as follows. Catalyzes the attachment of proline to tRNA(Pro) in a two-step reaction: proline is first activated by ATP to form Pro-AMP and then transferred to the acceptor end of tRNA(Pro). As ProRS can inadvertently accommodate and process non-cognate amino acids such as alanine and cysteine, to avoid such errors it has two additional distinct editing activities against alanine. One activity is designated as 'pretransfer' editing and involves the tRNA(Pro)-independent hydrolysis of activated Ala-AMP. The other activity is designated 'posttransfer' editing and involves deacylation of mischarged Ala-tRNA(Pro). The misacylated Cys-tRNA(Pro) is not edited by ProRS. This Streptococcus pneumoniae serotype 19F (strain G54) protein is Proline--tRNA ligase.